We begin with the raw amino-acid sequence, 624 residues long: UvrABC system protein C (624 aa).

A GIY-YIG domain is found at 25-104 (AEPGVYFMRD…IKQHQPHFNV (80 aa)). The region spanning 214-249 (SELIDTLTPQMEAAAENLNFEQAARIRDQINGLKTL) is the UVR domain.

This sequence belongs to the UvrC family. In terms of assembly, interacts with UvrB in an incision complex.

It localises to the cytoplasm. Its function is as follows. The UvrABC repair system catalyzes the recognition and processing of DNA lesions. UvrC both incises the 5' and 3' sides of the lesion. The N-terminal half is responsible for the 3' incision and the C-terminal half is responsible for the 5' incision. The protein is UvrABC system protein C of Cyanothece sp. (strain PCC 7425 / ATCC 29141).